The following is a 182-amino-acid chain: MSESTTTIETAWLAIGQIVAPQGLRGEMRVNPSSDFPERFLIPGPRWLRRPRQTEPEVVELERGRAIAGKNLYIVQLAGITSREQAEALRGCELLVPASDRPELDEGEFHVLDLIDLSVIDQASSTPLGIVRDVVSAGNDLLVVELTDGREVYIPFVEAIVPVVDLAQGRIEITPPPGLLEL.

Residues 106 to 179 (EGEFHVLDLI…RIEITPPPGL (74 aa)) form the PRC barrel domain.

The protein belongs to the RimM family. In terms of assembly, binds ribosomal protein uS19.

It localises to the cytoplasm. Its function is as follows. An accessory protein needed during the final step in the assembly of 30S ribosomal subunit, possibly for assembly of the head region. Essential for efficient processing of 16S rRNA. May be needed both before and after RbfA during the maturation of 16S rRNA. It has affinity for free ribosomal 30S subunits but not for 70S ribosomes. The protein is Ribosome maturation factor RimM of Synechococcus elongatus (strain ATCC 33912 / PCC 7942 / FACHB-805) (Anacystis nidulans R2).